Consider the following 279-residue polypeptide: Acetyl-coenzyme A carboxylase carboxyl transferase subunit beta (279 aa).

One can recognise a CoA carboxyltransferase N-terminal domain in the interval 23–279; that stretch reads LWWKCEECGA…IVRLAGMLKV (257 aa). Zn(2+) contacts are provided by C27, C30, C46, and C49. Residues 27 to 49 form a C4-type zinc finger; it reads CEECGAMIHKKQLEDHVYTCSDC.

It belongs to the AccD/PCCB family. As to quaternary structure, acetyl-CoA carboxylase is a heterohexamer composed of biotin carboxyl carrier protein (AccB), biotin carboxylase (AccC) and two subunits each of ACCase subunit alpha (AccA) and ACCase subunit beta (AccD). Requires Zn(2+) as cofactor.

Its subcellular location is the cytoplasm. It catalyses the reaction N(6)-carboxybiotinyl-L-lysyl-[protein] + acetyl-CoA = N(6)-biotinyl-L-lysyl-[protein] + malonyl-CoA. It functions in the pathway lipid metabolism; malonyl-CoA biosynthesis; malonyl-CoA from acetyl-CoA: step 1/1. Component of the acetyl coenzyme A carboxylase (ACC) complex. Biotin carboxylase (BC) catalyzes the carboxylation of biotin on its carrier protein (BCCP) and then the CO(2) group is transferred by the transcarboxylase to acetyl-CoA to form malonyl-CoA. The protein is Acetyl-coenzyme A carboxylase carboxyl transferase subunit beta of Chlorobium limicola (strain DSM 245 / NBRC 103803 / 6330).